We begin with the raw amino-acid sequence, 301 residues long: tRNA dimethylallyltransferase (301 aa).

An ATP-binding site is contributed by glycine 9 to serine 16. Threonine 11 to serine 16 provides a ligand contact to substrate. Residues aspartate 34–glutamine 37 form an interaction with substrate tRNA region.

Belongs to the IPP transferase family. In terms of assembly, monomer. Requires Mg(2+) as cofactor.

The catalysed reaction is adenosine(37) in tRNA + dimethylallyl diphosphate = N(6)-dimethylallyladenosine(37) in tRNA + diphosphate. Functionally, catalyzes the transfer of a dimethylallyl group onto the adenine at position 37 in tRNAs that read codons beginning with uridine, leading to the formation of N6-(dimethylallyl)adenosine (i(6)A). This is tRNA dimethylallyltransferase from Corynebacterium glutamicum (strain R).